The sequence spans 780 residues: Cullin-5 (780 aa).

Ser-34 is modified (phosphoserine). Thr-210 carries the post-translational modification Phosphothreonine. In terms of domain architecture, Cullin neddylation spans 711 to 772 (RILRTQEAII…HKYIRRDESD (62 aa)). Lys-724 participates in a covalent cross-link: Glycyl lysine isopeptide (Lys-Gly) (interchain with G-Cter in NEDD8).

Belongs to the cullin family. As to quaternary structure, component of multiple cullin-5-RING E3 ubiquitin-protein ligase complexes (ECS complexes, also named CRL5 complexes) formed of CUL5, Elongin BC (ELOB and ELOC), RNF7/RBX2 and a variable SOCS box domain-containing protein as substrate-specific recognition component. CUL5-containing ECS complexes specifically contain RNF7/RBX2, and not RBX1, as catalytic subunit. Component of the ECS(ASB2) complex with the substrate recognition component ASB2. Component of the ECS(ASB6) complex with the substrate recognition component ASB6. Component of the ECS(ASB7) complex with the substrate recognition component ASB7. Component of the ECS(ASB9) complex with the substrate recognition component ASB9. Component of the ECS(ASB11) complex with the substrate recognition component ASB11. Component of the ECS(ASB12) complex with the substrate recognition component ASB12. Component of the ECS(LRRC41) complex with the substrate recognition component LRRC41. Component of the ECS(SOCS1) complex with the substrate recognition component SOCS1. Component of the ECS(SOCS2) complex with the substrate recognition component SOCS2. Component of the ECS(WSB1) complex with the substrate recognition subunit WSB1. Component of the ECS(SOCS3) complex with the substrate recognition component SOCS3. Component of the ECS(SOCS7) complex with the substrate recognition component SOCS7. Component of the ECS(SPSB1) complex with the substrate recognition component SPSB1. Component of the ECS(SPSB3) complex with the substrate recognition component SPSB3. Component of the ECS(SPSB2) complex with the substrate recognition component SPSB2. Component of the ECS(SPSB4) complex with the substrate recognition component SPSB4. Component of the ECS(RAB40) complex with the substrate recognition subunit RAB40A, RAB40B or RAB40C. Component of the ECS(KLHDC1) complex with the substrate recognition component KLHDC1. Component of the ECS(PCMTD1) complex with the substrate recognition subunit PCMTD1. May also form complexes containing RBX1 and ELOA or VHL; additional evidence is however required to confirm this result in vivo. Interacts (when neddylated) with ARIH2; leading to activate the E3 ligase activity of ARIH2. Interacts with ERCC6; the interaction is induced by DNA damaging agents or inhibitors of RNA polymerase II elongation. Interacts with ELOA (via the BC-box). Interacts (unneddylated form) with DCUN1D1, DCUN1D2, DCUN1D3, DCUN1D4 and DCUN1D5; these interactions promote the cullin neddylation. Neddylated; which enhances the ubiquitination activity of ECS complexes and prevents binding of the inhibitor CAND1. Deneddylated via its interaction with the COP9 signalosome (CSN).

Its subcellular location is the nucleus. The protein operates within protein modification; protein ubiquitination. Its function is as follows. Core component of multiple cullin-5-RING E3 ubiquitin-protein ligase complexes (ECS complexes, also named CRL5 complexes), which mediate the ubiquitination and subsequent proteasomal degradation of target proteins. Acts a scaffold protein that contributes to catalysis through positioning of the substrate and the ubiquitin-conjugating enzyme. The functional specificity of the E3 ubiquitin-protein ligase complex depends on the variable SOCS box-containing substrate recognition component. Acts as a key regulator of neuron positioning during cortex development: component of various SOCS-containing ECS complexes, such as the ECS(SOCS7) complex, that regulate reelin signaling by mediating ubiquitination and degradation of DAB1. ECS(SOCS1) seems to direct ubiquitination of JAK2. The ECS(SOCS2) complex mediates the ubiquitination and subsequent proteasomal degradation of phosphorylated EPOR and GHR. The ECS(SPSB3) complex catalyzes ubiquitination of nuclear CGAS. ECS(KLHDC1) complex is part of the DesCEND (destruction via C-end degrons) pathway and mediates ubiquitination and degradation of truncated SELENOS selenoprotein produced by failed UGA/Sec decoding, which ends with a glycine. The ECS(ASB9) complex mediates ubiquitination and degradation of CKB. As part of some ECS complex, promotes 'Lys-11'-linked ubiquitination and degradation of BTRC. As part of a multisubunit ECS complex, polyubiquitinates monoubiquitinated POLR2A. As part of the ECS(RAB40C) complex, mediates ANKRD28 ubiquitination and degradation, thereby regulating protein phosphatase 6 (PP6) complex activity and focal adhesion assembly during cell migration. As part of the ECS(RAB40A) complex, mediates RHOU 'Lys-48'-linked ubiquitination and degradation, thus inhibiting focal adhesion disassembly during cell migration. As part of the ECS(RAB40B) complex, mediates LIMA1/EPLIN and RAP2 ubiquitination, thereby regulating actin cytoskeleton dynamics and stress fiber formation during cell migration. May form a cell surface vasopressin receptor. The protein is Cullin-5 of Pongo abelii (Sumatran orangutan).